A 328-amino-acid chain; its full sequence is uncharacterized protein (328 aa).

The tract at residues 1–22 (MPVKPNQPRPSTKQDPSSGASR) is disordered. A compositionally biased stretch (polar residues) spans 9 to 21 (RPSTKQDPSSGAS). 6 helical membrane passes run 66–86 (FSFL…GFVL), 126–146 (TVGL…IGNL), 176–196 (FLSL…TSVA), 221–241 (LIAL…ILWV), 255–275 (GTLM…VALP), and 290–310 (IGLM…AAWI).

It to E.coli YhjD.

The protein resides in the cell inner membrane. This is an uncharacterized protein from Dickeya dadantii (strain 3937) (Erwinia chrysanthemi (strain 3937)).